Here is a 206-residue protein sequence, read N- to C-terminus: Small ribosomal subunit protein uS4 (206 aa).

The S4 RNA-binding domain maps to 93-156; the sequence is CRLDNLVYRL…RKIKIIAEAL (64 aa).

This sequence belongs to the universal ribosomal protein uS4 family. As to quaternary structure, part of the 30S ribosomal subunit. Contacts protein S5. The interaction surface between S4 and S5 is involved in control of translational fidelity.

One of the primary rRNA binding proteins, it binds directly to 16S rRNA where it nucleates assembly of the body of the 30S subunit. Its function is as follows. With S5 and S12 plays an important role in translational accuracy. The protein is Small ribosomal subunit protein uS4 of Protochlamydia amoebophila (strain UWE25).